The following is a 646-amino-acid chain: Lipoteichoic acid synthase (646 aa).

Over 1–7 (MSLPKKK) the chain is Cytoplasmic. Residues 8–28 (IGIFAFFLLTVFTITLKTYFS) traverse the membrane as a helical segment. Residues 29-43 (YYVDFSLGVKGLVQN) are Extracellular-facing. A helical transmembrane segment spans residues 44 to 64 (LILIMNPYSLIALVLSVFLFF). Over 65 to 68 (KGKK) the chain is Cytoplasmic. A helical transmembrane segment spans residues 69–89 (AFWFIFIGGFLLTFLLYANVV). The Extracellular portion of the chain corresponds to 90–119 (YFRFFSDFLTFSTLNQAGNVESMGGAVSAS). A helical transmembrane segment spans residues 120 to 140 (FKWYDFVYFIDTIIYLAILIF). At 141–153 (KRKWLDNRAFSKK) the chain is on the cytoplasmic side. The helical transmembrane segment at 154 to 174 (FVPVVMATSVALFFLNLAFAE) threads the bilayer. At 175-646 (TDRPELLTRT…KSGPKGNEKK (472 aa)) the chain is on the extracellular side. Mn(2+)-binding residues include Glu255 and Thr300. Thr300 is an active-site residue. His416 contacts substrate. The Mn(2+) site is built by Asp475 and His476.

It belongs to the LTA synthase family. Post-translationally, proteolytically cleaved.

Its subcellular location is the cell membrane. It is found in the secreted. It participates in cell wall biogenesis; lipoteichoic acid biosynthesis. Catalyzes the polymerization of lipoteichoic acid (LTA) polyglycerol phosphate, a reaction that presumably uses phosphatidylglycerol (PG) as substrate. Is required for staphylococcal growth and cell division process. This chain is Lipoteichoic acid synthase (ltaS), found in Staphylococcus epidermidis (strain ATCC 12228 / FDA PCI 1200).